A 124-amino-acid chain; its full sequence is Large ribosomal subunit protein bL20 (124 aa).

The protein belongs to the bacterial ribosomal protein bL20 family.

Its function is as follows. Binds directly to 23S ribosomal RNA and is necessary for the in vitro assembly process of the 50S ribosomal subunit. It is not involved in the protein synthesizing functions of that subunit. The chain is Large ribosomal subunit protein bL20 from Gemmatimonas aurantiaca (strain DSM 14586 / JCM 11422 / NBRC 100505 / T-27).